A 157-amino-acid polypeptide reads, in one-letter code: Transcription elongation factor GreA (157 aa).

Residues 17 to 37 (ELERLLKLRPQISEAIAEARE) are a coiled coil.

This sequence belongs to the GreA/GreB family.

Necessary for efficient RNA polymerase transcription elongation past template-encoded arresting sites. The arresting sites in DNA have the property of trapping a certain fraction of elongating RNA polymerases that pass through, resulting in locked ternary complexes. Cleavage of the nascent transcript by cleavage factors such as GreA or GreB allows the resumption of elongation from the new 3'terminus. GreA releases sequences of 2 to 3 nucleotides. The sequence is that of Transcription elongation factor GreA from Vibrio parahaemolyticus serotype O3:K6 (strain RIMD 2210633).